Consider the following 177-residue polypeptide: RNA pyrophosphohydrolase (177 aa).

Residues 6 to 149 form the Nudix hydrolase domain; the sequence is GYRPNVGIVI…KRDVYRRVMK (144 aa). Positions 38-59 match the Nudix box motif; the sequence is GGINPGESPEQAMYRELFEEVG.

The protein belongs to the Nudix hydrolase family. RppH subfamily. A divalent metal cation serves as cofactor.

Accelerates the degradation of transcripts by removing pyrophosphate from the 5'-end of triphosphorylated RNA, leading to a more labile monophosphorylated state that can stimulate subsequent ribonuclease cleavage. This is RNA pyrophosphohydrolase from Pectobacterium atrosepticum (strain SCRI 1043 / ATCC BAA-672) (Erwinia carotovora subsp. atroseptica).